Consider the following 653-residue polypeptide: Acetyl-coenzyme A synthetase 1 (653 aa).

CoA is bound by residues 191–194, Thr-311, and Asn-335; that span reads RGGR. ATP contacts are provided by residues 387 to 389, 411 to 416, Asp-500, and Arg-515; these read GEP and DTWWQT. Position 523 (Ser-523) interacts with CoA. Position 526 (Arg-526) interacts with ATP. 3 residues coordinate Mg(2+): Val-537, His-539, and Val-542. Residue Arg-584 coordinates CoA. Position 609 is an N6-acetyllysine (Lys-609).

Belongs to the ATP-dependent AMP-binding enzyme family. Requires Mg(2+) as cofactor. Acetylated. Deacetylation by the SIR2-homolog deacetylase activates the enzyme.

It catalyses the reaction acetate + ATP + CoA = acetyl-CoA + AMP + diphosphate. Its function is as follows. Catalyzes the conversion of acetate into acetyl-CoA (AcCoA), an essential intermediate at the junction of anabolic and catabolic pathways. AcsA undergoes a two-step reaction. In the first half reaction, AcsA combines acetate with ATP to form acetyl-adenylate (AcAMP) intermediate. In the second half reaction, it can then transfer the acetyl group from AcAMP to the sulfhydryl group of CoA, forming the product AcCoA. This Pseudomonas putida (strain ATCC 47054 / DSM 6125 / CFBP 8728 / NCIMB 11950 / KT2440) protein is Acetyl-coenzyme A synthetase 1.